The following is a 154-amino-acid chain: MKLNELRDHEGATKNRKRIGRGIGSGTGKTGGCGVKGQKSRSGVSLNGFEGGQMPIYRRLPKRGFKNLFAKTYNEVSLGRIQLAVDAGKLNIEKSVDVAALKDAGIIRRFKNGVRLLSDGELKSKIVFNISGASKVARTKIEKVGGQINVPESI.

The segment covering 1–13 has biased composition (basic and acidic residues); it reads MKLNELRDHEGAT. Residues 1–44 form a disordered region; the sequence is MKLNELRDHEGATKNRKRIGRGIGSGTGKTGGCGVKGQKSRSGV. Positions 21-35 are enriched in gly residues; sequence RGIGSGTGKTGGCGV.

Belongs to the universal ribosomal protein uL15 family. In terms of assembly, part of the 50S ribosomal subunit.

In terms of biological role, binds to the 23S rRNA. The protein is Large ribosomal subunit protein uL15 of Bartonella bacilliformis (strain ATCC 35685 / KC583 / Herrer 020/F12,63).